A 371-amino-acid polypeptide reads, in one-letter code: o-succinylbenzoate synthase (371 aa).

The active-site Proton donor is Lys-164. Mg(2+) is bound by residues Asp-189, Glu-214, and Asp-239. Lys-263 serves as the catalytic Proton acceptor.

It belongs to the mandelate racemase/muconate lactonizing enzyme family. MenC type 2 subfamily. The cofactor is a divalent metal cation.

The catalysed reaction is (1R,6R)-6-hydroxy-2-succinyl-cyclohexa-2,4-diene-1-carboxylate = 2-succinylbenzoate + H2O. The protein operates within quinol/quinone metabolism; 1,4-dihydroxy-2-naphthoate biosynthesis; 1,4-dihydroxy-2-naphthoate from chorismate: step 4/7. Its pathway is quinol/quinone metabolism; menaquinone biosynthesis. Converts 2-succinyl-6-hydroxy-2,4-cyclohexadiene-1-carboxylate (SHCHC) to 2-succinylbenzoate (OSB). Does not show detectable N-acylamino acid racemase (NAAAR) activity with N-acetyl-S-methionine as substrate. This Bacillus subtilis (strain 168) protein is o-succinylbenzoate synthase.